Consider the following 287-residue polypeptide: Prepilin leader peptidase/N-methyltransferase (287 aa).

The chain crosses the membrane as a helical span at residues 12 to 32 (FMYLVVGLFSLAVGSLLNVII). Zn(2+)-binding residues include Cys71, Cys74, Cys96, and Cys99. Helical transmembrane passes span 127–147 (FTIQ…LVFI), 158–178 (LTLG…FVSL), 182–202 (VLSC…FYLM), 215–235 (LFAA…LLIS), and 259–279 (PFGP…DSII).

The protein belongs to the peptidase A24 family. The cofactor is Zn(2+).

Its subcellular location is the cell inner membrane. The catalysed reaction is Typically cleaves a -Gly-|-Phe- bond to release an N-terminal, basic peptide of 5-8 residues from type IV prepilin, and then N-methylates the new N-terminal amino group, the methyl donor being S-adenosyl-L-methionine.. Plays an essential role in type IV pili and type II pseudopili formation by proteolytically removing the leader sequence from substrate proteins and subsequently monomethylating the alpha-amino group of the newly exposed N-terminal phenylalanine. The chain is Prepilin leader peptidase/N-methyltransferase (pilD) from Legionella pneumophila.